A 96-amino-acid chain; its full sequence is Co-chaperonin GroES (96 aa).

This sequence belongs to the GroES chaperonin family. In terms of assembly, heptamer of 7 subunits arranged in a ring. Interacts with the chaperonin GroEL.

It is found in the cytoplasm. In terms of biological role, together with the chaperonin GroEL, plays an essential role in assisting protein folding. The GroEL-GroES system forms a nano-cage that allows encapsulation of the non-native substrate proteins and provides a physical environment optimized to promote and accelerate protein folding. GroES binds to the apical surface of the GroEL ring, thereby capping the opening of the GroEL channel. In Aromatoleum aromaticum (strain DSM 19018 / LMG 30748 / EbN1) (Azoarcus sp. (strain EbN1)), this protein is Co-chaperonin GroES.